Here is a 407-residue protein sequence, read N- to C-terminus: Inhibin beta B chain (407 aa).

A signal peptide spans 1-28 (MDGLPGRALGAACLLLLAAGWLGPEAWG). The disordered stretch occupies residues 26 to 62 (AWGSPTPPPTPAAPPPPPPPGSPGGSQDTCTSCGGFR). A propeptide spanning residues 29–292 (SPTPPPTPAA…GDSRHRIRKR (264 aa)) is cleaved from the precursor. Pro residues predominate over residues 30–47 (PTPPPTPAAPPPPPPPGS). N93 carries N-linked (GlcNAc...) asparagine glycosylation. Disulfide bonds link C296-C304, C303-C372, C332-C404, and C336-C406.

This sequence belongs to the TGF-beta family. Dimeric, linked by one or more disulfide bonds. Inhibin B is a dimer of alpha and beta-B. Activin B is a homodimer of beta-B. Activin AB is a dimer of beta-A and beta-B. Interacts with FST and FSTL3. Activin B interacts with BMPR2.

It localises to the secreted. Functionally, inhibins and activins inhibit and activate, respectively, the secretion of follitropin by the pituitary gland. Inhibins/activins are involved in regulating a number of diverse functions such as hypothalamic and pituitary hormone secretion, gonadal hormone secretion, germ cell development and maturation, erythroid differentiation, insulin secretion, nerve cell survival, embryonic axial development or bone growth, depending on their subunit composition. Inhibins appear to oppose the functions of activins. Its function is as follows. Activin B is a dimer of alpha and beta-B that plays a role in several essential biological processes including embryonic development, stem cell maintenance and differentiation, haematopoiesis, cell proliferation and wound healing. Signals through type I receptor ACVR1C, abundantly expressed in pancreatic beta cells, and type II receptors like ACVR2A or BMPR2. Upon ligand binding, these receptors phosphorylate intracellular signaling mediators SMAD2 and SMAD3, which form a complex with SMAD4, translocate to the nucleus, and regulate gene expression. Plays a crucial role in the induction of hepcidin by inflammation through activation of ACVR1C and subsequent phosphorylation of SMAD1/5/8. Regulates adipocyte lipid metabolism by decreasing non-esterified fatty acids and glycerol release and increases intracellular triglyceride content. Stimulates wound healing by promoting cell migration and hair follicle regeneration through the JNK and ERK signaling pathways downstream of RHOA. In terms of biological role, inhibin B is a dimer of alpha and beta-B that plays a crucial role in the regulation of the reproductive system by inhibiting the secretion of follicle-stimulating hormone (FSH) from the anterior pituitary gland. Thereby, maintains reproductive homeostasis in both males and females. Acts as a more potent suppressor of FSH release than inhibin A. Functions as competitive receptor antagonist binding activin type II receptors with high affinity in the presence of the TGF-beta type III coreceptor/TGFBR3L. This chain is Inhibin beta B chain (INHBB), found in Homo sapiens (Human).